Consider the following 446-residue polypeptide: Exodeoxyribonuclease 7 large subunit (446 aa).

Belongs to the XseA family. In terms of assembly, heterooligomer composed of large and small subunits.

It is found in the cytoplasm. The catalysed reaction is Exonucleolytic cleavage in either 5'- to 3'- or 3'- to 5'-direction to yield nucleoside 5'-phosphates.. Functionally, bidirectionally degrades single-stranded DNA into large acid-insoluble oligonucleotides, which are then degraded further into small acid-soluble oligonucleotides. This chain is Exodeoxyribonuclease 7 large subunit, found in Streptococcus agalactiae serotype Ia (strain ATCC 27591 / A909 / CDC SS700).